The primary structure comprises 154 residues: Large ribosomal subunit protein uL30 (154 aa).

The tract at residues 114–139 is disordered; that stretch reads PTLRLHPPRGGHDGIKHPTKEGGQLG. Basic and acidic residues predominate over residues 123–133; it reads GGHDGIKHPTK.

It belongs to the universal ribosomal protein uL30 family. Part of the 50S ribosomal subunit.

In Natronomonas pharaonis (strain ATCC 35678 / DSM 2160 / CIP 103997 / JCM 8858 / NBRC 14720 / NCIMB 2260 / Gabara) (Halobacterium pharaonis), this protein is Large ribosomal subunit protein uL30.